The sequence spans 345 residues: Phosphate acyltransferase (345 aa).

Belongs to the PlsX family. In terms of assembly, homodimer. Probably interacts with PlsY.

Its subcellular location is the cytoplasm. The enzyme catalyses a fatty acyl-[ACP] + phosphate = an acyl phosphate + holo-[ACP]. It participates in lipid metabolism; phospholipid metabolism. In terms of biological role, catalyzes the reversible formation of acyl-phosphate (acyl-PO(4)) from acyl-[acyl-carrier-protein] (acyl-ACP). This enzyme utilizes acyl-ACP as fatty acyl donor, but not acyl-CoA. In Chromobacterium violaceum (strain ATCC 12472 / DSM 30191 / JCM 1249 / CCUG 213 / NBRC 12614 / NCIMB 9131 / NCTC 9757 / MK), this protein is Phosphate acyltransferase.